A 314-amino-acid polypeptide reads, in one-letter code: NAD-dependent protein lipoamidase sirtuin-4, mitochondrial (314 aa).

Residues 1 to 28 (MKMSFALTFRSAKGRWIANPSQPCSKAS) constitute a mitochondrion transit peptide. The Deacetylase sirtuin-type domain occupies 37 to 314 (PPLDPEKVKE…GELLPLIDPC (278 aa)). Residues 62–82 (GAGI…VGLY) and 143–146 (QNVD) contribute to the NAD(+) site. The Proton acceptor role is filled by His-161. Positions 169, 172, 220, and 223 each coordinate Zn(2+). Residues 260-262 (GSS), 286-288 (NIG), and Cys-304 each bind NAD(+).

This sequence belongs to the sirtuin family. Class II subfamily. In terms of assembly, interacts with GLUD1, IDE and SLC25A5. Interacts with DLAT and PDHX. Interacts with MCCC1 (via the biotin carboxylation domain). Interacts with PCCA and PC. Requires Zn(2+) as cofactor. As to expression, detected in vascular smooth muscle and striated muscle. Detected in insulin-producing beta-cells in pancreas islets of Langerhans (at protein level). Widely expressed. Weakly expressed in leukocytes and fetal thymus.

The protein localises to the mitochondrion matrix. It catalyses the reaction N(6)-[(R)-lipoyl]-L-lysyl-[protein] + NAD(+) + H2O = 2''-O-lipoyl-ADP-D-ribose + nicotinamide + L-lysyl-[protein]. It carries out the reaction N(6)-biotinyl-L-lysyl-[protein] + NAD(+) + H2O = 2''-O-biotinyl-ADP-D-ribose + nicotinamide + L-lysyl-[protein]. The catalysed reaction is N(6)-acetyl-L-lysyl-[protein] + NAD(+) + H2O = 2''-O-acetyl-ADP-D-ribose + nicotinamide + L-lysyl-[protein]. The enzyme catalyses L-cysteinyl-[protein] + NAD(+) = S-(ADP-D-ribosyl)-L-cysteinyl-[protein] + nicotinamide + H(+). Functionally, acts as a NAD-dependent protein lipoamidase, biotinylase, deacetylase and ADP-ribosyl transferase. Catalyzes more efficiently removal of lipoyl- and biotinyl- than acetyl-lysine modifications. Inhibits the pyruvate dehydrogenase complex (PDH) activity via the enzymatic hydrolysis of the lipoamide cofactor from the E2 component, DLAT, in a phosphorylation-independent manner. Catalyzes the transfer of ADP-ribosyl groups onto target proteins, including mitochondrial GLUD1, inhibiting GLUD1 enzyme activity. Acts as a negative regulator of mitochondrial glutamine metabolism by mediating mono ADP-ribosylation of GLUD1: expressed in response to DNA damage and negatively regulates anaplerosis by inhibiting GLUD1, leading to block metabolism of glutamine into tricarboxylic acid cycle and promoting cell cycle arrest. In response to mTORC1 signal, SIRT4 expression is repressed, promoting anaplerosis and cell proliferation. Acts as a tumor suppressor. Also acts as a NAD-dependent protein deacetylase: mediates deacetylation of 'Lys-471' of MLYCD, inhibiting its activity, thereby acting as a regulator of lipid homeostasis. Does not seem to deacetylate PC. Controls fatty acid oxidation by inhibiting PPARA transcriptional activation. Impairs SIRT1-PPARA interaction probably through the regulation of NAD(+) levels. Down-regulates insulin secretion. The polypeptide is NAD-dependent protein lipoamidase sirtuin-4, mitochondrial (Homo sapiens (Human)).